Consider the following 345-residue polypeptide: Protein GAMETE CELL DEFECTIVE 1, mitochondrial (345 aa).

A mitochondrion-targeting transit peptide spans 1–43 (MLALRKTLLHGRLPAAPPAAAAAAIASRIPALLRRLSSSPGDG). The disordered stretch occupies residues 36-82 (LSSSPGDGQGGDEWGSSWSTGITKEHFDGSDAAVGRPVTSPSKPVSP).

The protein resides in the mitochondrion. In terms of biological role, essential for fertility (male and female gametophyte functions and development). Required for the integrity of female gametic mitochondria. Involved in embryo apical-basal patterning, and particularly dorsal-ventral patterning, during early embryogenesis, and endosperm free nucleus positioning and development as well as early endosperm development, probably by modulating the expression pattern of related genes (e.g. AL1, MYB3/AL2, CYP78A13/GE, PNH1, HAZ1, MPK6 and OSH1). Has function in triggering of endosperm programmed cell death (PCD) leading to syncytial endosperm cellularization and starchy endosperm cell maturation. Implicated in central vacuole dynamics necessary for microspore development leading to pollen production, and for pollen development and germination. The protein is Protein GAMETE CELL DEFECTIVE 1, mitochondrial of Oryza sativa subsp. indica (Rice).